The chain runs to 249 residues: 23S rRNA (guanosine-2'-O-)-methyltransferase RlmB (249 aa).

S-adenosyl-L-methionine is bound by residues Gly-200, Ile-220, and Leu-229.

The protein belongs to the class IV-like SAM-binding methyltransferase superfamily. RNA methyltransferase TrmH family. RlmB subfamily.

It is found in the cytoplasm. It catalyses the reaction guanosine(2251) in 23S rRNA + S-adenosyl-L-methionine = 2'-O-methylguanosine(2251) in 23S rRNA + S-adenosyl-L-homocysteine + H(+). In terms of biological role, specifically methylates the ribose of guanosine 2251 in 23S rRNA. This chain is 23S rRNA (guanosine-2'-O-)-methyltransferase RlmB, found in Xanthomonas campestris pv. campestris (strain ATCC 33913 / DSM 3586 / NCPPB 528 / LMG 568 / P 25).